A 586-amino-acid chain; its full sequence is A-type ATP synthase subunit A (586 aa).

Residue 232 to 239 (GPFGSGKT) participates in ATP binding.

Belongs to the ATPase alpha/beta chains family. Has multiple subunits with at least A(3), B(3), C, D, E, F, H, I and proteolipid K(x).

Its subcellular location is the cell membrane. It carries out the reaction ATP + H2O + 4 H(+)(in) = ADP + phosphate + 5 H(+)(out). Functionally, component of the A-type ATP synthase that produces ATP from ADP in the presence of a proton gradient across the membrane. The A chain is the catalytic subunit. The polypeptide is A-type ATP synthase subunit A (Methanococcus maripaludis (strain C5 / ATCC BAA-1333)).